Consider the following 289-residue polypeptide: Oxaloacetate decarboxylase (289 aa).

Substrate is bound at residue serine 50. Mg(2+) is bound at residue aspartate 88. Residues arginine 159 and histidine 235 each contribute to the substrate site.

This sequence belongs to the isocitrate lyase/PEP mutase superfamily. Oxaloacetate decarboxylase family. Homotetramer; dimer of dimers. Mg(2+) serves as cofactor.

The enzyme catalyses oxaloacetate + H(+) = pyruvate + CO2. In terms of biological role, catalyzes the decarboxylation of oxaloacetate into pyruvate. Seems to play a role in maintaining cellular concentrations of bicarbonate and pyruvate. The protein is Oxaloacetate decarboxylase of Pseudomonas savastanoi pv. phaseolicola (strain 1448A / Race 6) (Pseudomonas syringae pv. phaseolicola (strain 1448A / Race 6)).